A 301-amino-acid polypeptide reads, in one-letter code: Small ribosomal subunit protein uS2 (301 aa).

Belongs to the universal ribosomal protein uS2 family.

This chain is Small ribosomal subunit protein uS2, found in Acidobacterium capsulatum (strain ATCC 51196 / DSM 11244 / BCRC 80197 / JCM 7670 / NBRC 15755 / NCIMB 13165 / 161).